We begin with the raw amino-acid sequence, 285 residues long: 2-dehydro-3-deoxyphosphooctonate aldolase (285 aa).

Belongs to the KdsA family.

Its subcellular location is the cytoplasm. It carries out the reaction D-arabinose 5-phosphate + phosphoenolpyruvate + H2O = 3-deoxy-alpha-D-manno-2-octulosonate-8-phosphate + phosphate. Its pathway is carbohydrate biosynthesis; 3-deoxy-D-manno-octulosonate biosynthesis; 3-deoxy-D-manno-octulosonate from D-ribulose 5-phosphate: step 2/3. It functions in the pathway bacterial outer membrane biogenesis; lipopolysaccharide biosynthesis. The protein is 2-dehydro-3-deoxyphosphooctonate aldolase of Delftia acidovorans (strain DSM 14801 / SPH-1).